The primary structure comprises 187 residues: Corticoliberin (187 aa).

A signal peptide spans 1 to 24; it reads MRLRLLVSAGMLLVALSPCLPCRA. Positions 25–144 are excised as a propeptide; that stretch reads LLSRGSVSGA…HQGALERERR (120 aa). The disordered stretch occupies residues 75-95; it reads AARLSPNSTPLTAGRGSRPSH. Ile-185 carries the isoleucine amide modification.

This sequence belongs to the sauvagine/corticotropin-releasing factor/urotensin I family. As to quaternary structure, interacts (via C-terminus) with CRFR1 (via N-terminal extracellular domain). As to expression, produced by the hypothalamus.

It localises to the secreted. Hormone regulating the release of corticotropin from pituitary gland. Induces NLRP6 in intestinal epithelial cells, hence may influence gut microbiota profile. This chain is Corticoliberin (Crh), found in Rattus norvegicus (Rat).